We begin with the raw amino-acid sequence, 623 residues long: Indolepyruvate oxidoreductase subunit IorA (623 aa).

[4Fe-4S] cluster-binding residues include cysteine 573, cysteine 576, cysteine 579, cysteine 585, cysteine 602, cysteine 605, cysteine 608, and cysteine 612. One can recognise a 4Fe-4S ferredoxin-type domain in the interval 593 to 622 (EKVSIDQSLCVGCAVCAKICPNRAIKPAKS).

In terms of assembly, heterodimer of the IorA and IorB subunits. Requires [4Fe-4S] cluster as cofactor.

The catalysed reaction is indole-3-pyruvate + 2 oxidized [2Fe-2S]-[ferredoxin] + CoA = (indol-3-yl)acetyl-CoA + 2 reduced [2Fe-2S]-[ferredoxin] + CO2 + H(+). Functionally, catalyzes the ferredoxin-dependent oxidative decarboxylation of arylpyruvates. The chain is Indolepyruvate oxidoreductase subunit IorA (iorA) from Archaeoglobus fulgidus (strain ATCC 49558 / DSM 4304 / JCM 9628 / NBRC 100126 / VC-16).